The chain runs to 216 residues: Proenkephalin-A-B (216 aa).

Propeptides lie at residues 64–85 (MDELYHAEPEEDDAGGEILAKN), 93–131 (EYDSNRDASDLLRELLATSGDPESAIYHDNNSETPGEMN), 144–155 (STDLEDETRGIQ), 165–175 (VGRPEWWQDYQ), and 183–207 (TRFTDSFLPSDEDGESYSKENPDME). The segment at 114–133 (PESAIYHDNNSETPGEMNKR) is disordered.

Belongs to the opioid neuropeptide precursor family. The N-terminal domain contains 6 conserved cysteines thought to be involved in disulfide bonding and/or processing.

The protein resides in the secreted. Functionally, enkephalin neuropeptides compete with and mimic the effects of opiate drugs. They play a role in a number of physiologic functions, including pain perception and responses to stress. This chain is Proenkephalin-A-B (penk-b), found in Xenopus laevis (African clawed frog).